The sequence spans 376 residues: Probable tRNA sulfurtransferase (376 aa).

A THUMP domain is found at 51-152 (EENLKNLKYV…KNSVYVFDKS (102 aa)). Residues 170–171 (LI), 195–196 (TF), R252, G274, and Q283 each bind ATP.

It belongs to the ThiI family.

Its subcellular location is the cytoplasm. The enzyme catalyses [ThiI sulfur-carrier protein]-S-sulfanyl-L-cysteine + a uridine in tRNA + 2 reduced [2Fe-2S]-[ferredoxin] + ATP + H(+) = [ThiI sulfur-carrier protein]-L-cysteine + a 4-thiouridine in tRNA + 2 oxidized [2Fe-2S]-[ferredoxin] + AMP + diphosphate. It catalyses the reaction [ThiS sulfur-carrier protein]-C-terminal Gly-Gly-AMP + S-sulfanyl-L-cysteinyl-[cysteine desulfurase] + AH2 = [ThiS sulfur-carrier protein]-C-terminal-Gly-aminoethanethioate + L-cysteinyl-[cysteine desulfurase] + A + AMP + 2 H(+). Its pathway is cofactor biosynthesis; thiamine diphosphate biosynthesis. In terms of biological role, catalyzes the ATP-dependent transfer of a sulfur to tRNA to produce 4-thiouridine in position 8 of tRNAs, which functions as a near-UV photosensor. Also catalyzes the transfer of sulfur to the sulfur carrier protein ThiS, forming ThiS-thiocarboxylate. This is a step in the synthesis of thiazole, in the thiamine biosynthesis pathway. The sulfur is donated as persulfide by IscS. The protein is Probable tRNA sulfurtransferase of Mycoplasmopsis synoviae (strain 53) (Mycoplasma synoviae).